The sequence spans 273 residues: Probable glycerophosphodiester phosphodiesterase GpdQ (273 aa).

7 residues coordinate Fe cation: D8, H10, D50, N80, H154, H194, and H196.

Belongs to the cyclic nucleotide phosphodiesterase class-III family. Fe(2+) is required as a cofactor.

The catalysed reaction is a sn-glycero-3-phosphodiester + H2O = an alcohol + sn-glycerol 3-phosphate + H(+). It carries out the reaction sn-glycero-3-phosphoethanolamine + H2O = ethanolamine + sn-glycerol 3-phosphate + H(+). In terms of biological role, catalyzes the hydrolysis of the 3'-5' phosphodiester bond of glycerophosphodiesters such as glycerophosphorylethanolamine (GPE), a typical phospholipid metabolite. The polypeptide is Probable glycerophosphodiester phosphodiesterase GpdQ (Arcobacter nitrofigilis (strain ATCC 33309 / DSM 7299 / CCUG 15893 / LMG 7604 / NCTC 12251 / CI) (Campylobacter nitrofigilis)).